Consider the following 209-residue polypeptide: Thiamine-phosphate synthase (209 aa).

4-amino-2-methyl-5-(diphosphooxymethyl)pyrimidine-binding positions include 41-45 (QYRNK) and Asn73. Mg(2+)-binding residues include Asp74 and Asp93. A 4-amino-2-methyl-5-(diphosphooxymethyl)pyrimidine-binding site is contributed by Ser112. 139–141 (SST) contacts 2-[(2R,5Z)-2-carboxy-4-methylthiazol-5(2H)-ylidene]ethyl phosphate. Lys142 contacts 4-amino-2-methyl-5-(diphosphooxymethyl)pyrimidine. 2-[(2R,5Z)-2-carboxy-4-methylthiazol-5(2H)-ylidene]ethyl phosphate is bound at residue Gly168.

It belongs to the thiamine-phosphate synthase family. Mg(2+) is required as a cofactor.

The catalysed reaction is 2-[(2R,5Z)-2-carboxy-4-methylthiazol-5(2H)-ylidene]ethyl phosphate + 4-amino-2-methyl-5-(diphosphooxymethyl)pyrimidine + 2 H(+) = thiamine phosphate + CO2 + diphosphate. It catalyses the reaction 2-(2-carboxy-4-methylthiazol-5-yl)ethyl phosphate + 4-amino-2-methyl-5-(diphosphooxymethyl)pyrimidine + 2 H(+) = thiamine phosphate + CO2 + diphosphate. The enzyme catalyses 4-methyl-5-(2-phosphooxyethyl)-thiazole + 4-amino-2-methyl-5-(diphosphooxymethyl)pyrimidine + H(+) = thiamine phosphate + diphosphate. Its pathway is cofactor biosynthesis; thiamine diphosphate biosynthesis; thiamine phosphate from 4-amino-2-methyl-5-diphosphomethylpyrimidine and 4-methyl-5-(2-phosphoethyl)-thiazole: step 1/1. Functionally, condenses 4-methyl-5-(beta-hydroxyethyl)thiazole monophosphate (THZ-P) and 2-methyl-4-amino-5-hydroxymethyl pyrimidine pyrophosphate (HMP-PP) to form thiamine monophosphate (TMP). The sequence is that of Thiamine-phosphate synthase from Methylobacillus flagellatus (strain ATCC 51484 / DSM 6875 / VKM B-1610 / KT).